Here is a 78-residue protein sequence, read N- to C-terminus: Sec-independent protein translocase protein TatA (78 aa).

The chain crosses the membrane as a helical span at residues 1–21 (MGMPSMPELLIILLIVVLLFG). Residues 46 to 78 (DEEEVATENKKEIEEKTTASTTKTTADQDTTKA) form a disordered region. Over residues 52 to 62 (TENKKEIEEKT) the composition is skewed to basic and acidic residues. Residues 63-78 (TASTTKTTADQDTTKA) show a composition bias toward low complexity.

This sequence belongs to the TatA/E family. As to quaternary structure, the Tat system comprises two distinct complexes: a TatABC complex, containing multiple copies of TatA, TatB and TatC subunits, and a separate TatA complex, containing only TatA subunits. Substrates initially bind to the TatABC complex, which probably triggers association of the separate TatA complex to form the active translocon.

Its subcellular location is the cell inner membrane. In terms of biological role, part of the twin-arginine translocation (Tat) system that transports large folded proteins containing a characteristic twin-arginine motif in their signal peptide across membranes. TatA could form the protein-conducting channel of the Tat system. The chain is Sec-independent protein translocase protein TatA from Nitratiruptor sp. (strain SB155-2).